We begin with the raw amino-acid sequence, 186 residues long: Tumor necrosis factor alpha-induced protein 8-like protein 1 (186 aa).

Belongs to the TNFAIP8 family.

The protein resides in the cytoplasm. The polypeptide is Tumor necrosis factor alpha-induced protein 8-like protein 1 (TNFAIP8L1) (Gallus gallus (Chicken)).